The chain runs to 554 residues: Glucose-6-phosphate isomerase (554 aa).

Glutamate 359 serves as the catalytic Proton donor. Active-site residues include histidine 390 and lysine 518.

This sequence belongs to the GPI family.

The protein resides in the cytoplasm. The enzyme catalyses alpha-D-glucose 6-phosphate = beta-D-fructose 6-phosphate. Its pathway is carbohydrate biosynthesis; gluconeogenesis. It functions in the pathway carbohydrate degradation; glycolysis; D-glyceraldehyde 3-phosphate and glycerone phosphate from D-glucose: step 2/4. Its function is as follows. Catalyzes the reversible isomerization of glucose-6-phosphate to fructose-6-phosphate. The chain is Glucose-6-phosphate isomerase from Pseudomonas entomophila (strain L48).